Reading from the N-terminus, the 325-residue chain is Beta-ketoacyl-[acyl-carrier-protein] synthase III (325 aa).

Catalysis depends on residues Cys112 and His250. An ACP-binding region spans residues 251-255 (QANIR). Asn280 is a catalytic residue.

It belongs to the thiolase-like superfamily. FabH family. As to quaternary structure, homodimer.

The protein localises to the cytoplasm. It carries out the reaction malonyl-[ACP] + acetyl-CoA + H(+) = 3-oxobutanoyl-[ACP] + CO2 + CoA. The protein operates within lipid metabolism; fatty acid biosynthesis. Catalyzes the condensation reaction of fatty acid synthesis by the addition to an acyl acceptor of two carbons from malonyl-ACP. Catalyzes the first condensation reaction which initiates fatty acid synthesis and may therefore play a role in governing the total rate of fatty acid production. Possesses both acetoacetyl-ACP synthase and acetyl transacylase activities. Its substrate specificity determines the biosynthesis of branched-chain and/or straight-chain of fatty acids. This Streptococcus mutans serotype c (strain ATCC 700610 / UA159) protein is Beta-ketoacyl-[acyl-carrier-protein] synthase III.